We begin with the raw amino-acid sequence, 346 residues long: Protein PXR1 (346 aa).

Disordered regions lie at residues 1–27 and 146–315; these read MGLAAPKNKRKLGNDPNNTRWSRNTEN and EDAE…QVSV. Polar residues predominate over residues 15-27; it reads DPNNTRWSRNTEN. One can recognise a G-patch domain in the interval 25 to 79; the sequence is TENFGHRMLRSQGWEPGQYLGPQDASHAVYHTAASASHIKVALKEDNLGLGAKMN. Positions 215–230 are enriched in basic residues; sequence SKSKKSHKSKKEKKRR. The segment covering 235-245 has biased composition (acidic residues); it reads ASDEQESEDEE. A compositionally biased stretch (basic residues) spans 249-274; the sequence is KRRKKEKKERKERRREKREKKLKKKQ. Residues 293–314 show a composition bias toward polar residues; sequence GVDTGASTPVASGTSTPVSQVS.

This sequence belongs to the PINX1 family.

The protein resides in the nucleus. Its subcellular location is the nucleolus. Functionally, involved in rRNA-processing at A0, A1 and A2 sites and negatively regulates telomerase. The chain is Protein PXR1 (PXR1) from Pyricularia oryzae (strain 70-15 / ATCC MYA-4617 / FGSC 8958) (Rice blast fungus).